The chain runs to 342 residues: Biotin synthase (342 aa).

The Radical SAM core domain occupies 36 to 260 (NRIQISTLLS…MMPKSYIRLS (225 aa)). 3 residues coordinate [4Fe-4S] cluster: C51, C55, and C58. C95, C126, C186, and R258 together coordinate [2Fe-2S] cluster.

The protein belongs to the radical SAM superfamily. Biotin synthase family. In terms of assembly, homodimer. It depends on [4Fe-4S] cluster as a cofactor. Requires [2Fe-2S] cluster as cofactor.

The catalysed reaction is (4R,5S)-dethiobiotin + (sulfur carrier)-SH + 2 reduced [2Fe-2S]-[ferredoxin] + 2 S-adenosyl-L-methionine = (sulfur carrier)-H + biotin + 2 5'-deoxyadenosine + 2 L-methionine + 2 oxidized [2Fe-2S]-[ferredoxin]. It participates in cofactor biosynthesis; biotin biosynthesis; biotin from 7,8-diaminononanoate: step 2/2. In terms of biological role, catalyzes the conversion of dethiobiotin (DTB) to biotin by the insertion of a sulfur atom into dethiobiotin via a radical-based mechanism. This chain is Biotin synthase, found in Buchnera aphidicola subsp. Schizaphis graminum (strain Sg).